Here is a 344-residue protein sequence, read N- to C-terminus: G-protein coupled receptor str-217 (344 aa).

The Extracellular portion of the chain corresponds to 1-10 (MLLFQKTLSR). A helical membrane pass occupies residues 11–31 (VAAPISVAANLILILLIIFKS). At 32–39 (PAQMGNYK) the chain is on the cytoplasmic side. A helical transmembrane segment spans residues 40–60 (YLLIGLSIFEMSYAVLDVVSE). Residues 61-88 (TTVLSIKKSFVVVVPYKDRSFGQETAMD) are Extracellular-facing. Residues 89–109 (INLIYCGFFGFSMGMFVVIFA) form a helical membrane-spanning segment. The Cytoplasmic segment spans residues 110 to 128 (YRSFLTTGNTILRKFEGFK). Residues 129-149 (IISWFAYPLFYAIVWILVAWG) traverse the membrane as a helical segment. The Extracellular segment spans residues 150–195 (PLASFPEMDIVVRPFLLDELNMTVDEVAYTGRLFYSTIDNSLRYSA). The N-linked (GlcNAc...) asparagine glycan is linked to Asn-170. A helical transmembrane segment spans residues 196–216 (ILTGVLQWVLTASSLFLVIFF). Topologically, residues 217–256 (GLRCYFHYGKLVQLTDVQSIRLRQLQNQLFLALVCQATVP) are cytoplasmic. A helical membrane pass occupies residues 257–277 (LILMHIPVTILYTCCVLNIVF). The Extracellular segment spans residues 278-279 (NP). Residues 280–300 (FSVATTIALFPAIDPLPTIFI) form a helical membrane-spanning segment. Over 301-344 (VKNYRVALFEFVCPSCLCWSETLKHMGSNRITSYRSNTVNALSM) the chain is Cytoplasmic.

The protein belongs to the nematode receptor-like protein str family. As to expression, expressed in the ADL chemosensory neurons.

It localises to the cell membrane. In terms of biological role, probable G-protein coupled receptor. The polypeptide is G-protein coupled receptor str-217 (Caenorhabditis elegans).